The primary structure comprises 230 residues: 7-cyano-7-deazaguanine synthase (230 aa).

16-26 is an ATP binding site; that stretch reads LSGGLDSATVV. Zn(2+)-binding residues include cysteine 195, cysteine 205, cysteine 208, and cysteine 211.

This sequence belongs to the QueC family. The cofactor is Zn(2+).

It catalyses the reaction 7-carboxy-7-deazaguanine + NH4(+) + ATP = 7-cyano-7-deazaguanine + ADP + phosphate + H2O + H(+). Its pathway is purine metabolism; 7-cyano-7-deazaguanine biosynthesis. Catalyzes the ATP-dependent conversion of 7-carboxy-7-deazaguanine (CDG) to 7-cyano-7-deazaguanine (preQ(0)). This chain is 7-cyano-7-deazaguanine synthase, found in Pseudomonas fluorescens (strain Pf0-1).